A 2601-amino-acid polypeptide reads, in one-letter code: Centrosomal protein of 295 kDa (2601 aa).

The necessary for centriole targeting and microtubule association stretch occupies residues 1-560 (MKRKVVNTHK…KKTQPTGVGI (560 aa)). S14 carries the post-translational modification Phosphoserine. Coiled-coil stretches lie at residues 207-273 (KRPD…EDLA) and 500-552 (AARI…KRKK). Phosphoserine occurs at positions 654 and 938. The disordered stretch occupies residues 1008 to 1029 (PSADTKSGKIQEQHSSKSEKGL). Positions 1013-1027 (KSGKIQEQHSSKSEK) are enriched in basic and acidic residues. Coiled-coil stretches lie at residues 1053-1082 (LHDS…VELL) and 1498-1544 (IQSH…VSSE). The disordered stretch occupies residues 1558-1580 (ADSERTQKSFPTKSNDTLPSSHR). Over residues 1565-1577 (KSFPTKSNDTLPS) the composition is skewed to polar residues. At S1637 the chain carries Phosphoserine. Residues 1728 to 1758 (QEKLLVQRQTALQQQIQKHEETLKDFFKDSQ) adopt a coiled-coil conformation. Basic and acidic residues-rich tracts occupy residues 1795-1827 (RHAD…DLGR), 1985-2003 (FSEH…KEEE), and 2100-2112 (DNRD…DSSS). 3 disordered regions span residues 1795-1834 (RHAD…KPPV), 1979-2004 (LTDP…EEET), and 2085-2117 (HPDF…SHCA). Residue T2473 is modified to Phosphothreonine. Residues 2478–2601 (SLQEAFIKRK…LEKLRAKNTC (124 aa)) are ALMS motif. A coiled-coil region spans residues 2556-2581 (RLYNQLAEVKQQKEEKTKQEAYAQNR).

In terms of assembly, interacts (via ALMS motif) with microtubules; this interaction is direct.

The protein resides in the cytoplasm. It localises to the cytoskeleton. It is found in the microtubule organizing center. The protein localises to the centrosome. Its subcellular location is the centriole. The protein resides in the spindle. Centriole-enriched microtubule-binding protein involved in centriole biogenesis. Essential for the generation of the distal portion of new-born centrioles in a CPAP- and CEP120-mediated elongation dependent manner during the cell cycle S/G2 phase after formation of the initiating cartwheel structure. Required for the recruitment of centriolar proteins, such as POC1B, POC5 and CEP135, into the distal portion of centrioles. Also required for centriole-to-centrosome conversion during mitotic progression, but is dispensable for cartwheel removal or centriole disengagement. Binds to and stabilizes centriolar microtubule. May be involved in ciliogenesis. This chain is Centrosomal protein of 295 kDa, found in Homo sapiens (Human).